Here is a 1014-residue protein sequence, read N- to C-terminus: Poly [ADP-ribose] polymerase 1 (1014 aa).

Residue Ala-2 is modified to N-acetylalanine. The PARP-type 1 zinc-finger motif lies at 9–93; that stretch reads YRVEYAKSGR…KVKKTAEAGG (85 aa). Positions 21 and 24 each coordinate Zn(2+). Ser-41 carries the post-translational modification Phosphoserine. Positions 53 and 56 each coordinate Zn(2+). N6-acetyllysine is present on residues Lys-97 and Lys-105. Residues 113–203 form a PARP-type 2 zinc finger; the sequence is FAAEYAKSNR…ALKKQLPGVK (91 aa). The Zn(2+) site is built by Cys-125 and Cys-128. Residue Lys-131 is modified to N6-acetyllysine. Positions 159 and 162 each coordinate Zn(2+). Residues Ser-177, Ser-179, and Ser-185 each carry the phosphoserine modification. Residue Lys-192 forms a Glycyl lysine isopeptide (Lys-Gly) (interchain with G-Cter in SUMO2) linkage. Positions 198–233 are disordered; it reads QLPGVKSEGKRKGDEVDGVDEVAKKKSKKEKDKDSK. Lys-203 is covalently cross-linked (Glycyl lysine isopeptide (Lys-Gly) (interchain with G-Cter in SUMO1); alternate). Residue Lys-203 forms a Glycyl lysine isopeptide (Lys-Gly) (interchain with G-Cter in SUMO2); alternate linkage. Over residues 204 to 233 the composition is skewed to basic and acidic residues; that stretch reads SEGKRKGDEVDGVDEVAKKKSKKEKDKDSK. 2 short sequence motifs (nuclear localization signal) span residues 207–209 and 221–226; these read KRK and KKKSKK. The PADR1 zinc-binding domain maps to 225-359; that stretch reads KKEKDKDSKL…VKKQDRIFPP (135 aa). Lys-249 participates in a covalent cross-link: Glycyl lysine isopeptide (Lys-Gly) (interchain with G-Cter in SUMO2). Residues Ser-274 and Ser-277 each carry the phosphoserine modification. The interval 290 to 332 is zinc ribbon; it reads GALLPCEECSGQLVFKSDAYYCTGDVTAWTKCMVKTQTPNRKE. Residues Cys-295, Cys-298, Cys-311, and Cys-321 each contribute to the Zn(2+) site. Residues 361–385 are disordered; that stretch reads TSASVAATPPPSTASAPAAVNSSAS. Residue Ser-364 is modified to Phosphoserine. The residue at position 368 (Thr-368) is a Phosphothreonine. Residues 373 to 524 are automodification domain; the sequence is TASAPAAVNS…GINKSEKRMK (152 aa). Residues 385-476 form the BRCT domain; that stretch reads SADKPLSNMK…KSLQELFLAH (92 aa). Residue Asp-387 is modified to PolyADP-ribosyl aspartic acid. Glu-407, Glu-413, Glu-435, Glu-437, Glu-444, Glu-445, Glu-448, and Glu-456 each carry polyADP-ribosyl glutamic acid. Lys-467 participates in a covalent cross-link: Glycyl lysine isopeptide (Lys-Gly) (interchain with G-Cter in SUMO2). PolyADP-ribosyl glutamic acid is present on residues Glu-471 and Glu-484. Lys-486 participates in a covalent cross-link: Glycyl lysine isopeptide (Lys-Gly) (interchain with G-Cter in SUMO1); alternate. Lys-486 participates in a covalent cross-link: Glycyl lysine isopeptide (Lys-Gly) (interchain with G-Cter in SUMO2); alternate. PolyADP-ribosyl glutamic acid is present on residues Glu-488 and Glu-491. ADP-ribosylserine is present on residues Ser-499, Ser-504, and Ser-507. Residue Lys-512 forms a Glycyl lysine isopeptide (Lys-Gly) (interchain with G-Cter in SUMO2) linkage. Residues Glu-513 and Glu-514 each carry the polyADP-ribosyl glutamic acid modification. At Ser-519 the chain carries ADP-ribosylserine. Glu-520 bears the PolyADP-ribosyl glutamic acid mark. Residue Lys-521 is modified to N6-(ADP-ribosyl)lysine. Lys-528 is covalently cross-linked (Glycyl lysine isopeptide (Lys-Gly) (interchain with G-Cter in SUMO2)). The 97-residue stretch at 542–638 folds into the WGR domain; the sequence is SAHVLEKGGK…KNFTKYPKKF (97 aa). Thr-594 carries the post-translational modification Phosphothreonine; by PRKDC. 2 positions are modified to N6-acetyllysine: Lys-600 and Lys-621. The region spanning 662-779 is the PARP alpha-helical domain; it reads KSKLPKPVQD…DIEVAYSLLR (118 aa). Lys-748 participates in a covalent cross-link: Glycyl lysine isopeptide (Lys-Gly) (interchain with G-Cter in SUMO1); alternate. Lys-748 participates in a covalent cross-link: Glycyl lysine isopeptide (Lys-Gly) (interchain with G-Cter in SUMO2); alternate. Phosphoserine is present on residues Ser-782 and Ser-786. Residues 788 to 1014 enclose the PARP catalytic domain; it reads DPIDVNYEKL…LKFNFKTSLW (227 aa). NAD(+) is bound by residues 862-864, Gly-871, Arg-878, and Ser-904; that span reads HGS. Glu-988 acts as the For poly [ADP-ribose] polymerase activity in catalysis.

This sequence belongs to the ARTD/PARP family. In terms of assembly, homodimer; PARP-type zinc-fingers from separate PARP1 molecules form a dimer module that specifically recognizes DNA strand breaks. Heterodimer; heterodimerizes with PARP2. Interacts (via the PARP catalytic domain) with HPF1. Interacts with NMNAT1. Interacts with nucleosomes; with a preference for nucleosomes containing H2A.X. Interacts with APTX. Component of a base excision repair (BER) complex, containing at least XRCC1, PARP1, PARP2, POLB and LRIG3. Interacts with SRY. The SWAP complex consists of NPM1, NCL, PARP1 and SWAP70. Interacts with TIAM2. Interacts with PARP3; leading to activate PARP1 in absence of DNA. Interacts (when poly-ADP-ribosylated) with CHD1L (via macro domain). Interacts with the DNA polymerase alpha catalytic subunit POLA1; this interaction functions as part of the control of replication fork progression. Interacts with EEF1A1 and TXK. Interacts with RNF4. Interacts with RNF146. Interacts with ZNF423. Interacts with APLF. Interacts with SNAI1 (via zinc fingers); the interaction requires SNAI1 to be poly-ADP-ribosylated and non-phosphorylated (active) by GSK3B. Interacts (when poly-ADP-ribosylated) with PARP9. Interacts with NR4A3; activates PARP1 by improving acetylation of PARP1 and suppressing the interaction between PARP1 and SIRT1. Interacts (via catalytic domain) with PUM3; the interaction inhibits the poly-ADP-ribosylation activity of PARP1 and the degradation of PARP1 by CASP3 following genotoxic stress. Interacts with ZNF365. Interacts with RRP1B. Interacts with TIMELESS; the interaction is direct. Interacts with CGAS; leading to impede the formation of the PARP1-TIMELESS complex. Interacts with KHDC3L, the interaction is increased following the formation of DNA double-strand breaks. Interacts (when auto-poly-ADP-ribosylated) with XRCC1; leading to inhibit PARP1 ADP-ribosyltransferase activity. Interacts with SPINDOC; promoting PARP1 ADP-ribosyltransferase activity. Interacts with BANF1; leading to inhibit PARP1 ADP-ribosyltransferase activity in response to oxidative DNA damage. Interacts (when sumoylated and ubiquitinated) with VCP/p97; leading to its extraction from chromatin. Interacts with YARS1; Interacts with PACMP micropeptide; interaction. Interacts with PACMP micropeptide; Interacts with PACMP micropeptide; interaction. Interacts (when poly-ADP-ribosylated) with isoform 1 of MACROH2A1; MACROH2A1 specifically binds to poly-ADP-ribose chains and inhibits PARP1 activity, limiting the consumption of nuclear NAD(+). Interacts with CARM1; promoting recruitment to replication forks. Interacts with RECQL. Interacts with ZNF32; the interaction reshapes ZNF432 interacting proteins. Interacts with TPRN; TPRN interacts with a number of DNA damage response proteins, is recruited to sites of DNA damage and may play a role in DNA damage repair. As to quaternary structure, interacts (when auto-poly-ADP-ribosylated) with AIFM1. (Microbial infection) Interacts with human herpesvirus 8 (KSHV) protein RTA/ORF50; this interaction negatively regulates RTA/ORF50 transactivation activity. In terms of processing, poly-ADP-ribosylated on serine, glutamate and aspartate residues by autocatalysis. Auto-ADP-ribosylation on serine takes place following interaction with HPF1. Auto poly-ADP-ribosylation on serine residues promotes its dissociation from chromatin. Poly-ADP-ribosylated by PARP2; poly-ADP-ribosylation mediates the recruitment of CHD1L to DNA damage sites. Mono-ADP-ribosylated at Lys-521 by SIRT6 in response to oxidative stress, promoting recruitment to double-strand breaks (DSBs) sites. Post-translationally, phosphorylated at Thr-594 by PRKDC in response to DNA damage following virus infection, promoting its translocation to the cytosol. Phosphorylated by TXK. S-nitrosylated, leading to inhibit transcription regulation activity. In terms of processing, proteolytically cleaved by caspase-3 (CASP3) and caspase-7 (CASP7) in response to apoptosis to generate the Poly [ADP-ribose] polymerase 1, processed N-terminus and Poly [ADP-ribose] polymerase 1, processed C-terminus forms. CASP3-mediated cleavage is promoted by the TP53/p53-induced long non-coding RNA SPARCLE, which binds PARP1 in response to genotoxic stress. Post-translationally, sumoylated with SUMO1 or SUMO2 by PIAS4 following prolonged residence (trapping) to chromatin. Sumoylation promotes ubiquitination by RNF4 and removal from chromatin by VCP/p97. Ubiquitinated by RNF4 following sumoylation by PIAS4 in response to prolonged residence (trapping) to chromatin. Ubiquitination promotes removal from chromatin by VCP/p97.

The protein resides in the chromosome. It localises to the nucleus. The protein localises to the nucleolus. It is found in the cytoplasm. Its subcellular location is the cytosol. The enzyme catalyses NAD(+) + (ADP-D-ribosyl)n-acceptor = nicotinamide + (ADP-D-ribosyl)n+1-acceptor + H(+).. It carries out the reaction L-seryl-[protein] + NAD(+) = O-(ADP-D-ribosyl)-L-seryl-[protein] + nicotinamide + H(+). The catalysed reaction is L-aspartyl-[protein] + NAD(+) = 4-O-(ADP-D-ribosyl)-L-aspartyl-[protein] + nicotinamide. It catalyses the reaction L-glutamyl-[protein] + NAD(+) = 5-O-(ADP-D-ribosyl)-L-glutamyl-[protein] + nicotinamide. The enzyme catalyses L-tyrosyl-[protein] + NAD(+) = O-(ADP-D-ribosyl)-L-tyrosyl-[protein] + nicotinamide + H(+). It carries out the reaction L-histidyl-[protein] + NAD(+) = N(tele)-(ADP-D-ribosyl)-L-histidyl-[protein] + nicotinamide + H(+). ADP-ribosyltransferase activity is regulated via an allosteric activation mechanism. In absence of activation signal, PARP1 is autoinhibited by the PARP alpha-helical domain (also named HD region), which prevents effective NAD(+)-binding. Activity is highly stimulated by signals, such as DNA strand breaks. Binding to damaged DNA unfolds the PARP alpha-helical domain, relieving autoinhibition. Poly-ADP-ribosyltransferase activity is tightly regulated and PARP1 is removed from damaged chromatin following initial poly-ADP-ribosylation of chromatin to avoid prolonged residence (trapping) that has cytotoxic consequences. A number of factors (VCP/p97) or post-translational modifications (auto-poly-ADP-ribosylation or ubiquitination) promote PARP1 removal from chromatin. ADP-ribosyltransferase activity is inhibited by a number of PARP inhibitors (PARPi) compounds, that are used the treatment of breast or ovarian cancers that have defects in DNA repair by homologous recombination. PARPi molecules can be classified in three categories: type I compounds (EB-47, UKTT15 and BAD) that promote allosteric retention of PARP1 on DNA, type II inhibitors (talazoparib and olaparib) that mediate a non-allosteric inhibition, and type III inhibitors (rucaparib, niraparib, and veliparib) that promote allosteric release from DNA. Trapping to chromatin by PARPi molecules triggers activation of the cGAS-STING pathway. In terms of biological role, poly-ADP-ribosyltransferase that mediates poly-ADP-ribosylation of proteins and plays a key role in DNA repair. Mediates glutamate, aspartate, serine, histidine or tyrosine ADP-ribosylation of proteins: the ADP-D-ribosyl group of NAD(+) is transferred to the acceptor carboxyl group of target residues and further ADP-ribosyl groups are transferred to the 2'-position of the terminal adenosine moiety, building up a polymer with an average chain length of 20-30 units. Serine ADP-ribosylation of proteins constitutes the primary form of ADP-ribosylation of proteins in response to DNA damage. Specificity for the different amino acids is conferred by interacting factors, such as HPF1 and NMNAT1. Following interaction with HPF1, catalyzes serine ADP-ribosylation of target proteins; HPF1 confers serine specificity by completing the PARP1 active site. Also catalyzes tyrosine ADP-ribosylation of target proteins following interaction with HPF1. Following interaction with NMNAT1, catalyzes glutamate and aspartate ADP-ribosylation of target proteins; NMNAT1 confers glutamate and aspartate specificity. PARP1 initiates the repair of DNA breaks: recognizes and binds DNA breaks within chromatin and recruits HPF1, licensing serine ADP-ribosylation of target proteins, such as histones (H2BS6ADPr and H3S10ADPr), thereby promoting decompaction of chromatin and the recruitment of repair factors leading to the reparation of DNA strand breaks. HPF1 initiates serine ADP-ribosylation but restricts the polymerase activity of PARP1 in order to limit the length of poly-ADP-ribose chains. In addition to base excision repair (BER) pathway, also involved in double-strand breaks (DSBs) repair: together with TIMELESS, accumulates at DNA damage sites and promotes homologous recombination repair by mediating poly-ADP-ribosylation. Mediates the poly-ADP-ribosylation of a number of proteins, including itself, APLF, CHFR, RPA1 and NFAT5. In addition to proteins, also able to ADP-ribosylate DNA: catalyzes ADP-ribosylation of DNA strand break termini containing terminal phosphates and a 2'-OH group in single- and double-stranded DNA, respectively. Required for PARP9 and DTX3L recruitment to DNA damage sites. PARP1-dependent PARP9-DTX3L-mediated ubiquitination promotes the rapid and specific recruitment of 53BP1/TP53BP1, UIMC1/RAP80, and BRCA1 to DNA damage sites. PARP1-mediated DNA repair in neurons plays a role in sleep: senses DNA damage in neurons and promotes sleep, facilitating efficient DNA repair. In addition to DNA repair, also involved in other processes, such as transcription regulation, programmed cell death, membrane repair, adipogenesis and innate immunity. Acts as a repressor of transcription: binds to nucleosomes and modulates chromatin structure in a manner similar to histone H1, thereby altering RNA polymerase II. Acts both as a positive and negative regulator of transcription elongation, depending on the context. Acts as a positive regulator of transcription elongation by mediating poly-ADP-ribosylation of NELFE, preventing RNA-binding activity of NELFE and relieving transcription pausing. Acts as a negative regulator of transcription elongation in response to DNA damage by catalyzing poly-ADP-ribosylation of CCNT1, disrupting the phase separation activity of CCNT1 and subsequent activation of CDK9. Involved in replication fork progression following interaction with CARM1: mediates poly-ADP-ribosylation at replication forks, slowing fork progression. Poly-ADP-ribose chains generated by PARP1 also play a role in poly-ADP-ribose-dependent cell death, a process named parthanatos. Also acts as a negative regulator of the cGAS-STING pathway. Acts by mediating poly-ADP-ribosylation of CGAS: PARP1 translocates into the cytosol following phosphorylation by PRKDC and catalyzes poly-ADP-ribosylation and inactivation of CGAS. Acts as a negative regulator of adipogenesis: catalyzes poly-ADP-ribosylation of histone H2B on 'Glu-35' (H2BE35ADPr) following interaction with NMNAT1, inhibiting phosphorylation of H2B at 'Ser-36' (H2BS36ph), thereby blocking expression of pro-adipogenetic genes. Involved in the synthesis of ATP in the nucleus, together with NMNAT1, PARG and NUDT5. Nuclear ATP generation is required for extensive chromatin remodeling events that are energy-consuming. Promotes AIFM1-mediated apoptosis. This form, which translocates into the cytoplasm following cleavage by caspase-3 (CASP3) and caspase-7 (CASP7) in response to apoptosis, is auto-poly-ADP-ribosylated and serves as a poly-ADP-ribose carrier to induce AIFM1-mediated apoptosis. Functionally, this cleavage form irreversibly binds to DNA breaks and interferes with DNA repair, promoting DNA damage-induced apoptosis. This chain is Poly [ADP-ribose] polymerase 1, found in Homo sapiens (Human).